The primary structure comprises 986 residues: Bifunctional glutamine synthetase adenylyltransferase/adenylyl-removing enzyme (986 aa).

Positions 1–471 are adenylyl removase; sequence MAEAIERSLS…RYAQLFEQEA (471 aa). The interval 475–986 is adenylyl transferase; sequence TETGNLVFTG…RIFQGVVAAA (512 aa).

This sequence belongs to the GlnE family. Mg(2+) is required as a cofactor.

The enzyme catalyses [glutamine synthetase]-O(4)-(5'-adenylyl)-L-tyrosine + phosphate = [glutamine synthetase]-L-tyrosine + ADP. It catalyses the reaction [glutamine synthetase]-L-tyrosine + ATP = [glutamine synthetase]-O(4)-(5'-adenylyl)-L-tyrosine + diphosphate. Functionally, involved in the regulation of glutamine synthetase GlnA, a key enzyme in the process to assimilate ammonia. When cellular nitrogen levels are high, the C-terminal adenylyl transferase (AT) inactivates GlnA by covalent transfer of an adenylyl group from ATP to specific tyrosine residue of GlnA, thus reducing its activity. Conversely, when nitrogen levels are low, the N-terminal adenylyl removase (AR) activates GlnA by removing the adenylyl group by phosphorolysis, increasing its activity. The regulatory region of GlnE binds the signal transduction protein PII (GlnB) which indicates the nitrogen status of the cell. This chain is Bifunctional glutamine synthetase adenylyltransferase/adenylyl-removing enzyme, found in Rhizobium meliloti (strain 1021) (Ensifer meliloti).